Consider the following 226-residue polypeptide: Phosphoglycolate phosphatase (226 aa).

Aspartate 5 serves as the catalytic Nucleophile. Mg(2+)-binding residues include aspartate 5 and aspartate 7. Lysine 142 contributes to the substrate binding site. 2 residues coordinate Mg(2+): aspartate 164 and aspartate 168.

The protein belongs to the archaeal SPP-like hydrolase family. Requires Mg(2+) as cofactor.

It carries out the reaction 2-phosphoglycolate + H2O = glycolate + phosphate. Functionally, catalyzes the dephosphorylation of 2-phosphoglycolate. In Sulfurisphaera tokodaii (strain DSM 16993 / JCM 10545 / NBRC 100140 / 7) (Sulfolobus tokodaii), this protein is Phosphoglycolate phosphatase.